Reading from the N-terminus, the 239-residue chain is Heptaprenylglyceryl phosphate synthase (239 aa).

Lys-12 lines the sn-glycerol 1-phosphate pocket. Mg(2+)-binding residues include Asp-14 and Thr-40. Sn-glycerol 1-phosphate contacts are provided by residues 159-164 (YLEYSG), Gly-189, and 209-210 (GN).

This sequence belongs to the GGGP/HepGP synthase family. Group I subfamily. As to quaternary structure, homodimer. It depends on Mg(2+) as a cofactor.

The enzyme catalyses sn-glycerol 1-phosphate + all-trans-heptaprenyl diphosphate = 3-heptaprenyl-sn-glycero-1-phosphate + diphosphate. Its pathway is membrane lipid metabolism; glycerophospholipid metabolism. In terms of biological role, prenyltransferase that catalyzes in vivo the transfer of the heptaprenyl moiety of heptaprenyl pyrophosphate (HepPP; 35 carbon atoms) to the C3 hydroxyl of sn-glycerol-1-phosphate (G1P), producing heptaprenylglyceryl phosphate (HepGP). This reaction is an ether-bond-formation step in the biosynthesis of archaea-type G1P-based membrane lipids found in Bacillales. To a much lesser extent, is also able to use geranylgeranyl diphosphate (GGPP; C20) as the prenyl donor. The protein is Heptaprenylglyceryl phosphate synthase of Geobacillus kaustophilus (strain HTA426).